We begin with the raw amino-acid sequence, 159 residues long: Ribosomal RNA large subunit methyltransferase H (159 aa).

Residues leucine 76, glycine 108, and 127–132 contribute to the S-adenosyl-L-methionine site; that span reads FGLLTL.

It belongs to the RNA methyltransferase RlmH family. In terms of assembly, homodimer.

The protein resides in the cytoplasm. The enzyme catalyses pseudouridine(1915) in 23S rRNA + S-adenosyl-L-methionine = N(3)-methylpseudouridine(1915) in 23S rRNA + S-adenosyl-L-homocysteine + H(+). Functionally, specifically methylates the pseudouridine at position 1915 (m3Psi1915) in 23S rRNA. The polypeptide is Ribosomal RNA large subunit methyltransferase H (Streptococcus pyogenes serotype M18 (strain MGAS8232)).